We begin with the raw amino-acid sequence, 590 residues long: Glutathione S-transferase T3 (590 aa).

One can recognise a GST N-terminal domain in the interval 1 to 82 (MKLKVYADRM…YLSSAYPSVV (82 aa)). Glutathione is bound by residues 11-12 (SQ), 40-41 (QL), 53-54 (KV), and 66-67 (ES). In terms of domain architecture, GST C-terminal spans 89–232 (DLSKRARIHS…KDRCQKQREM (144 aa)). A Myb-like domain is found at 265 to 336 (DRRKHRRKWS…HCKQRWSKLN (72 aa)). Residues 402–427 (SKGGGSSKRTKLNNGDRVYSSSSNPE) are disordered.

The protein belongs to the GST superfamily. Theta family.

Its subcellular location is the nucleus. The catalysed reaction is RX + glutathione = an S-substituted glutathione + a halide anion + H(+). Its function is as follows. May be involved in the conjugation of reduced glutathione to a wide number of exogenous and endogenous hydrophobic electrophiles and have a detoxification role against certain herbicides. This chain is Glutathione S-transferase T3 (GSTT3), found in Arabidopsis thaliana (Mouse-ear cress).